The primary structure comprises 365 residues: Aminomethyltransferase (365 aa).

It belongs to the GcvT family. The glycine cleavage system is composed of four proteins: P, T, L and H.

The catalysed reaction is N(6)-[(R)-S(8)-aminomethyldihydrolipoyl]-L-lysyl-[protein] + (6S)-5,6,7,8-tetrahydrofolate = N(6)-[(R)-dihydrolipoyl]-L-lysyl-[protein] + (6R)-5,10-methylene-5,6,7,8-tetrahydrofolate + NH4(+). Its function is as follows. The glycine cleavage system catalyzes the degradation of glycine. The chain is Aminomethyltransferase from Chlorobaculum parvum (strain DSM 263 / NCIMB 8327) (Chlorobium vibrioforme subsp. thiosulfatophilum).